Consider the following 396-residue polypeptide: Elongation factor Tu (396 aa).

A tr-type G domain is found at K10 to E205. A G1 region spans residues G19–T26. G19–T26 contacts GTP. Residue T26 participates in Mg(2+) binding. Residues G62 to N66 form a G2 region. The interval D83–G86 is G3. GTP-binding positions include D83–H87 and N138–D141. Residues N138 to D141 form a G4 region. Residues S175 to L177 are G5.

This sequence belongs to the TRAFAC class translation factor GTPase superfamily. Classic translation factor GTPase family. EF-Tu/EF-1A subfamily. As to quaternary structure, monomer.

It is found in the cytoplasm. It catalyses the reaction GTP + H2O = GDP + phosphate + H(+). Functionally, GTP hydrolase that promotes the GTP-dependent binding of aminoacyl-tRNA to the A-site of ribosomes during protein biosynthesis. This chain is Elongation factor Tu, found in Corynebacterium diphtheriae (strain ATCC 700971 / NCTC 13129 / Biotype gravis).